Reading from the N-terminus, the 640-residue chain is Putative solute carrier organic anion transporter family member 1B7 (640 aa).

Residues 1-16 (MKISTTQIERRFEISS) lie on the Extracellular side of the membrane. Residues 17 to 37 (SLVGLIDGSFEIGNLFVIVFV) traverse the membrane as a helical segment. The Cytoplasmic segment spans residues 38–49 (SYFGSKLHRPKL). The helical transmembrane segment at 50-70 (IGIGCFLMGTGSILMALPHFF) threads the bilayer. Topologically, residues 71–123 (MGYYRYSKETNIDPSENSTSNLPNCLINQMLSLNRTPSEIIERGCVKESGSHM) are extracellular. The helical transmembrane segment at 124 to 144 (WIYVFMGNMLRGIGETPIVPL) threads the bilayer. The Cytoplasmic portion of the chain corresponds to 145–159 (GISYIDDFAKEGHSS). Residues 160–180 (LYLGTVNVMGMTGLVFAFMLG) traverse the membrane as a helical segment. Residues 181-211 (SLFAKMYVDIGYVDLSTIRITPKDSRWVGAW) are Extracellular-facing. Residues 212 to 232 (WLGFLVSGIVSIISSIPFFFL) form a helical membrane-spanning segment. Over 233–292 (PLNPNKPQKERKVSLFLHVLKTNDKRNQIANLTNRRKYITKNVTGFFQSLKSILTNPLYV) the chain is Cytoplasmic. S246 carries the post-translational modification Phosphoserine. A helical transmembrane segment spans residues 293-313 (IFVIFTLLHMSSYIASLTYII). The Extracellular segment spans residues 314 to 329 (KMVEQQYGWSASKTNF). The chain crosses the membrane as a helical span at residues 330 to 350 (LLGVLALPAVAIGMFSGGYII). The Cytoplasmic segment spans residues 351-362 (KKFKLSLVGLAK). A helical transmembrane segment spans residues 363–383 (LAFCSATVHLLSQVLYFFLIC). The Extracellular segment spans residues 384-492 (ESKSVAGLTL…CTRKSYVYFV (109 aa)). In terms of domain architecture, Kazal-like spans 406-461 (DVPLSYCNSECNCDESQWEPVCGNNGITYLSPCLAGCKSSSGNKEPIVFYNCSCVE). Intrachain disulfides connect C412–C442, C418–C438, and C427–C459. The helical transmembrane segment at 493-513 (IQVLDAFLCAVGLTSYSVLVI) threads the bilayer. At 514 to 521 (RIVQPELK) the chain is on the cytoplasmic side. The helical transmembrane segment at 522–542 (ALAIGFHSMIMRSLGGILVPI) threads the bilayer. Residues 543–577 (YFGALIDTTCMKWSTNSCGARGACRIYNSTYLGRA) are Extracellular-facing. A helical membrane pass occupies residues 578–598 (FFGLKVALIFPVLVLLTVFIF). At 599–640 (VVRKKSHGKDTKVLENERQVMDEANLEFLNDSEHFVPSAEEQ) the chain is on the cytoplasmic side. S636 carries the phosphoserine modification.

The protein belongs to the organo anion transporter (TC 2.A.60) family.

The protein resides in the cell membrane. In Homo sapiens (Human), this protein is Putative solute carrier organic anion transporter family member 1B7 (SLCO1B7).